The chain runs to 69 residues: DNA-directed RNA polymerase subunit omega (69 aa).

It belongs to the RNA polymerase subunit omega family. The RNAP catalytic core consists of 2 alpha, 1 beta, 1 beta' and 1 omega subunit. When a sigma factor is associated with the core the holoenzyme is formed, which can initiate transcription.

The enzyme catalyses RNA(n) + a ribonucleoside 5'-triphosphate = RNA(n+1) + diphosphate. Functionally, promotes RNA polymerase assembly. Latches the N- and C-terminal regions of the beta' subunit thereby facilitating its interaction with the beta and alpha subunits. The protein is DNA-directed RNA polymerase subunit omega of Pelotomaculum thermopropionicum (strain DSM 13744 / JCM 10971 / SI).